The chain runs to 425 residues: Dihydroorotase (425 aa).

Zn(2+) is bound by residues His-61 and His-63. Substrate-binding positions include 63 to 65 (HLR) and Asn-95. Lys-146, His-175, His-224, and Asp-293 together coordinate Zn(2+). Lys-146 bears the N6-carboxylysine mark. Residue Asp-293 is part of the active site. Substrate is bound by residues His-297 and 311–312 (PG).

This sequence belongs to the metallo-dependent hydrolases superfamily. DHOase family. Class I DHOase subfamily. Zn(2+) serves as cofactor.

It carries out the reaction (S)-dihydroorotate + H2O = N-carbamoyl-L-aspartate + H(+). It functions in the pathway pyrimidine metabolism; UMP biosynthesis via de novo pathway; (S)-dihydroorotate from bicarbonate: step 3/3. Its function is as follows. Catalyzes the reversible cyclization of carbamoyl aspartate to dihydroorotate. The polypeptide is Dihydroorotase (Aeropyrum pernix (strain ATCC 700893 / DSM 11879 / JCM 9820 / NBRC 100138 / K1)).